Consider the following 358-residue polypeptide: Peptide chain release factor 1 (358 aa).

An N5-methylglutamine modification is found at Q233. Residues 286–309 (AELASARKSQVGTGDRSERIRTYN) are disordered.

It belongs to the prokaryotic/mitochondrial release factor family. Post-translationally, methylated by PrmC. Methylation increases the termination efficiency of RF1.

The protein localises to the cytoplasm. Peptide chain release factor 1 directs the termination of translation in response to the peptide chain termination codons UAG and UAA. The chain is Peptide chain release factor 1 from Carboxydothermus hydrogenoformans (strain ATCC BAA-161 / DSM 6008 / Z-2901).